The primary structure comprises 467 residues: MTSWAEKYRPKNLDGILGNAKAVSELRAWAMAWEKGRPEVKCLILYGPPGVGKTSAALALASEMDWDYIELNASDQRTAEIIKSIAGPASQVSTFSGRRRLVILDEADNLHGTYDRGGAAAILRVIKNATQPVILIANEYYNIEKPLRDACRGVQFRSIRAQTIASLLREICRSEGIECEPEAVMHIAAMSGGDLRSAINDLEAAARGLKHLRLEDVATSERDVKASIFRVLDSIFKGEDSRSALEATYQLDESPEDLIHWIDENLPIVYKDRELAKGFECLSRADIFLGRVRRRQNYTLWRYAAFLMTGGVRAVSSKVRRGYTQFRPPSLWKRLGQTRKARSVRDSAARKIAAHCHVSTSYARSELLNFVGALLRSKKTGAAVAASLGLNIEEIALLTGSSPTTKKVQKLFEDAQKIIEAEQIAMIDRGLKIVDREIEKPEDKAMKYASVSKEIVQEKRQRSLFDF.

Residue Gly47–Thr54 coordinates ATP.

This sequence belongs to the activator 1 small subunits family. RfcL subfamily. As to quaternary structure, heteromultimer composed of small subunits (RfcS) and large subunits (RfcL).

Functionally, part of the RFC clamp loader complex which loads the PCNA sliding clamp onto DNA. The protein is Replication factor C large subunit of Methanothrix thermoacetophila (strain DSM 6194 / JCM 14653 / NBRC 101360 / PT) (Methanosaeta thermophila).